The sequence spans 171 residues: Serine acetyltransferase (171 aa).

It belongs to the transferase hexapeptide repeat family.

It is found in the cytoplasm. It catalyses the reaction L-serine + acetyl-CoA = O-acetyl-L-serine + CoA. It functions in the pathway amino-acid biosynthesis; L-cysteine biosynthesis; L-cysteine from L-serine: step 1/2. This is Serine acetyltransferase (cysE) from Helicobacter pylori (strain J99 / ATCC 700824) (Campylobacter pylori J99).